The chain runs to 403 residues: Heparan-sulfate 6-O-sulfotransferase 2 (403 aa).

The Cytoplasmic portion of the chain corresponds to 1-7; the sequence is MEDRSHK. The chain crosses the membrane as a helical; Signal-anchor for type II membrane protein span at residues 8–28; that stretch reads VLLALVMLFLFAVIVLQYVCP. At 29–403 the chain is on the lumenal side; it reads GTECQLLRLR…DYLGNVERWR (375 aa). N-linked (GlcNAc...) asparagine glycosylation occurs at N64. 88–96 provides a ligand contact to 3'-phosphoadenylyl sulfate; sequence HIQKTGGTT. Substrate-binding positions include 118-119, R135, W140, and H145; that span reads KK. The Proton acceptor role is filled by H145. 3'-phosphoadenylyl sulfate-binding residues include R180 and S188. Residues H192 and W199 each coordinate substrate. N259 is a glycosylation site (N-linked (GlcNAc...) asparagine). 312–314 serves as a coordination point for 3'-phosphoadenylyl sulfate; the sequence is TQY. Residue N315 is glycosylated (N-linked (GlcNAc...) asparagine). Residue 318–319 coordinates 3'-phosphoadenylyl sulfate; the sequence is RA. Positions 381-403 are disordered; sequence AHLREQGENSSSTDYLGNVERWR. The N-linked (GlcNAc...) asparagine glycan is linked to N389.

The protein belongs to the sulfotransferase 6 family.

It is found in the membrane. It catalyses the reaction alpha-D-glucosaminyl-[heparan sulfate](n) + 3'-phosphoadenylyl sulfate = 6-sulfo-alpha-D-glucosaminyl-[heparan sulfate](n) + adenosine 3',5'-bisphosphate + H(+). In terms of biological role, 6-O-sulfation enzyme which catalyzes the transfer of sulfate from 3'-phosphoadenosine 5'-phosphosulfate (PAPS) to position 6 of the N-sulfoglucosamine residue (GlcNS) of heparan sulfate. May also play a role in limb development. The protein is Heparan-sulfate 6-O-sulfotransferase 2 (HS6ST2) of Gallus gallus (Chicken).